The chain runs to 342 residues: Glycerol-1-phosphate dehydrogenase [NAD(P)+] (342 aa).

NAD(+) is bound by residues 84 to 88 and 106 to 109; these read GRPLD and TSAS. Asp111 lines the substrate pocket. Residue Ser115 coordinates NAD(+). Position 160 (Asp160) interacts with substrate. 2 residues coordinate Zn(2+): Asp160 and His241. His245 is a substrate binding site. Residue His260 participates in Zn(2+) binding.

This sequence belongs to the glycerol-1-phosphate dehydrogenase family. As to quaternary structure, homodimer. It depends on Zn(2+) as a cofactor.

The protein localises to the cytoplasm. It carries out the reaction sn-glycerol 1-phosphate + NAD(+) = dihydroxyacetone phosphate + NADH + H(+). The enzyme catalyses sn-glycerol 1-phosphate + NADP(+) = dihydroxyacetone phosphate + NADPH + H(+). Its pathway is membrane lipid metabolism; glycerophospholipid metabolism. In terms of biological role, catalyzes the NAD(P)H-dependent reduction of dihydroxyacetonephosphate (DHAP or glycerone phosphate) to glycerol 1-phosphate (G1P). The G1P thus generated is used as the glycerophosphate backbone of phospholipids in the cellular membranes of Archaea. This Pyrobaculum neutrophilum (strain DSM 2338 / JCM 9278 / NBRC 100436 / V24Sta) (Thermoproteus neutrophilus) protein is Glycerol-1-phosphate dehydrogenase [NAD(P)+].